The following is a 291-amino-acid chain: Release factor glutamine methyltransferase (291 aa).

Residues 127 to 131 (GTGSG), D150, W179, and N196 each bind S-adenosyl-L-methionine. 196 to 199 (NPPY) lines the substrate pocket.

Belongs to the protein N5-glutamine methyltransferase family. PrmC subfamily.

The enzyme catalyses L-glutaminyl-[peptide chain release factor] + S-adenosyl-L-methionine = N(5)-methyl-L-glutaminyl-[peptide chain release factor] + S-adenosyl-L-homocysteine + H(+). In terms of biological role, methylates the class 1 translation termination release factors RF1/PrfA and RF2/PrfB on the glutamine residue of the universally conserved GGQ motif. This is Release factor glutamine methyltransferase from Thermosynechococcus vestitus (strain NIES-2133 / IAM M-273 / BP-1).